The sequence spans 65 residues: MPKIKTNRAAAKRFKKTGSGKVKYSKSFGSHILAKKSRKRKRDLRQSHILDEANMKNIKRLLPYW.

2 disordered regions span residues 1–23 (MPKI…GKVK) and 29–48 (GSHI…RQSH). The span at 33 to 43 (LAKKSRKRKRD) shows a compositional bias: basic residues.

This sequence belongs to the bacterial ribosomal protein bL35 family.

This chain is Large ribosomal subunit protein bL35, found in Desulfatibacillum aliphaticivorans.